We begin with the raw amino-acid sequence, 1913 residues long: GREB1-like protein (1913 aa).

A compositionally biased stretch (acidic residues) spans 86–96; sequence MEDDEDEEEMS. 4 disordered regions span residues 86 to 111, 281 to 309, 1097 to 1157, and 1179 to 1207; these read MEDD…KPAP, NGTS…SPRP, EAER…TSSI, and DSLD…LAWS. Over residues 289–301 the composition is skewed to low complexity; sequence KSSSCSSTPSRPG. The span at 1118 to 1157 shows a compositional bias: polar residues; it reads PQSNSSAVTGTSGSIMENGVSSSSTAGKPQQQLLTPTSSI. A compositionally biased stretch (low complexity) spans 1187 to 1200; it reads SSTTSKPSSSSSSS. The chain crosses the membrane as a helical span at residues 1832-1852; it reads GVFFSGLLLYLCDSFVGADLL.

The protein belongs to the GREB1 family. Expressed in the inner ear, with a high presence in the spiral ganglia, cochlear nerve bundles, and hair cells.

It localises to the membrane. Its function is as follows. Plays a major role in early metanephros and genital development. The chain is GREB1-like protein (Greb1l) from Mus musculus (Mouse).